The primary structure comprises 394 residues: MNSFSQVPPGFRFHPTDEELVDYYLRKKVASKRIEIDIIKDVDLYKIEPCDLQELCKIGNEEQSEWYFFSHKDKKYPTGTRTNRATKAGFWKATGRDKAIYIRHSLIGMRKTLVFYKGRAPNGQKSDWIMHEYRLETSENGTPQEEGWVVCRVFKKKLAATVRKMGDYHSSPSQHWYDDQLSFMASEIISSSPRQFLPNHHYNRHHHQQTLPCGLNAFNNNNPNLQCKQELELHYNQMVQHQQQNHHLRESMFLQLPQLESPTSNCNSDNNNNTRNISNLQKSSNISHEEQLQQGNQSFSSLYYDQGVEQMTTDWRVLDKFVASQLSNDEEAAAVVSSSSHQNNVKIDTRNTGYHVIDEGINLPENDSERVVEMGEEYSNAHAASTSSSCQIDL.

The 150-residue stretch at 7–156 (VPPGFRFHPT…GWVVCRVFKK (150 aa)) folds into the NAC domain. A DNA-binding region spans residues 107–162 (IGMRKTLVFYKGRAPNGQKSDWIMHEYRLETSENGTPQEEGWVVCRVFKKKLAATV).

It belongs to the plant vascular related NAC-domain protein family. Interacts with NAC083/VNI2. Detected in root vessels of protoxylems, outermost metaxylems, inner metaxylems, shoots and hypocotyls. Expressed in roots, hypocotyls, cotyledons and leaves. Expressed in developing xylems. Specifically expressed in vessels in the secondary xylem of the root-hypocotyl region, and in vessels but not in interfascicular fibers in stems.

Its subcellular location is the nucleus. Transcription activator that binds to the secondary wall NAC binding element (SNBE), 5'-(T/A)NN(C/T)(T/C/G)TNNNNNNNA(A/C)GN(A/C/T)(A/T)-3', in the promoter of target genes. Involved in xylem formation by promoting the expression of secondary wall-associated transcription factors and of genes involved in secondary wall biosynthesis and programmed cell death, genes driven by the secondary wall NAC binding element (SNBE). Triggers thickening of secondary walls. This chain is NAC domain-containing protein 26, found in Arabidopsis thaliana (Mouse-ear cress).